A 1132-amino-acid chain; its full sequence is Mis18-binding protein 1 (1132 aa).

Residue Lys7 forms a Glycyl lysine isopeptide (Lys-Gly) (interchain with G-Cter in SUMO2) linkage. The residue at position 9 (Ser9) is a Phosphoserine. A Glycyl lysine isopeptide (Lys-Gly) (interchain with G-Cter in SUMO2) cross-link involves residue Lys65. 5 positions are modified to phosphoserine: Ser110, Ser131, Ser135, Ser172, and Ser192. Residues 123-154 (LRDKQEQPSRNSSLLEPQKSGNNETFTPNRVE) are disordered. The span at 130-150 (PSRNSSLLEPQKSGNNETFTP) shows a compositional bias: polar residues. Residues Lys211 and Lys262 each participate in a glycyl lysine isopeptide (Lys-Gly) (interchain with G-Cter in SUMO2) cross-link. The residue at position 299 (Ser299) is a Phosphoserine. Positions 306–332 (SERTTEGTSQQKVKEGNGKTVPGETGL) are disordered. The residue at position 365 (Ser365) is a Phosphoserine. The SANTA domain maps to 383 to 469 (VQLQEWMIKS…MFGFPENWKE (87 aa)). A disordered region spans residues 482 to 518 (EKNREKTKQKQKTGRSVRDIRKSMKNDARENQTDTAQ). Residues 497 to 513 (SVRDIRKSMKNDARENQ) are compositionally biased toward basic and acidic residues. Glycyl lysine isopeptide (Lys-Gly) (interchain with G-Cter in SUMO2) cross-links involve residues Lys534, Lys612, Lys639, and Lys647. Thr653 is modified (phosphothreonine). Residues Lys727 and Lys742 each participate in a glycyl lysine isopeptide (Lys-Gly) (interchain with G-Cter in SUMO2) cross-link. Residues 765 to 798 (HQSSPDLSSEESETEKEIKRKAEVKKTKAGNTKE) form a disordered region. Residues Ser772 and Ser773 each carry the phosphoserine modification. Over residues 779–790 (EKEIKRKAEVKK) the composition is skewed to basic and acidic residues. Thr821 carries the post-translational modification Phosphothreonine. Ser824 is subject to Phosphoserine. Lys840 participates in a covalent cross-link: Glycyl lysine isopeptide (Lys-Gly) (interchain with G-Cter in SUMO2). Ser860 is modified (phosphoserine). The region spanning 875-930 (IQDKEWNEKELQKLHCAFASLPKHKPGFWSEVAAAVGSRSPEECQRKYMENPRGKG) is the SANT domain. Residue Lys899 forms a Glycyl lysine isopeptide (Lys-Gly) (interchain with G-Cter in SUMO2) linkage. Residues 923-957 (MENPRGKGSQKHVTKKKPANSKGQNGKRGDADQKQ) form a disordered region. Residues 930–941 (GSQKHVTKKKPA) show a composition bias toward basic residues. Glycyl lysine isopeptide (Lys-Gly) (interchain with G-Cter in SUMO2) cross-links involve residues Lys956, Lys964, and Lys983. Residue Ser1008 is modified to Phosphoserine. Lys1079 participates in a covalent cross-link: Glycyl lysine isopeptide (Lys-Gly) (interchain with G-Cter in SUMO2). At Ser1086 the chain carries Phosphoserine. Phosphothreonine occurs at positions 1087 and 1089. Ser1104 and Ser1116 each carry phosphoserine.

In terms of assembly, interacts with SP1. Interacts with MIS18A. Identified in a complex containing MIS18A, OIP5/MIS18B, MIS18BP1, RBBP7 and RBBP4. Interacts with KAT7/HBO1. Interacts (via N-terminus) with FLNA (via N-terminus).

It is found in the nucleus. It localises to the chromosome. The protein resides in the centromere. In terms of biological role, required for recruitment of CENPA to centromeres and normal chromosome segregation during mitosis. The sequence is that of Mis18-binding protein 1 (MIS18BP1) from Homo sapiens (Human).